The chain runs to 4454 residues: MKVDRTKLKKTPTEAPADCRALIDKLKVCNDEQLLLELQQIKTWNIGKCELYHWVDLLDRFDGILADAGQTVENMSWMLVCDRPEKEQLKMLLLAVLNFTALLIEYSFSRHLYSSIEHLTTLLASSDMQVVLAVLNLLYVFSKRSNYITRLGSDKRTPLLTRLQHLAESWGGKENGFGLAECCRDLQMLKYPPSATTLHFEFYADPGAEVKIEKRTTSNTLHYIHIEQLDKISESPSEIMESLTKMYSIPKDKQMLLFTHIRLAHGFSNHRKRLQAVQARLHAISILVYSNALQESANSILYNGLIEELVDVLQITDKQLMEIKAASLRTLTSIVHLERTPKLSSIIDCTGTASYHGFLPVLVRNCIQAMIDPSMDPYPHQFATALFSFLYHLASYDAGGEALVSCGMMEALLKVIKFLGDEQDQITFVTRAVRVVDLITNLDMAAFQSHSGLSIFIYRLEHEVDLCRKECPFVIKPKIQRPSTTQEGEEMETDMDVADVTMESSPGSSISMEHRLDVELRASSSNSSTSISGPGPGPGPGPGPGPGPGPGPGPGPGLGPSLGPGPGPGPRPGVQCIPQRAALLKSMLNFLKKAIQDPAFSDGIRHVMDGSLPTSLKHIISNAEYYGPSLFLLATEVVTVFVFQEPSLLSSLQDNGLTDVMLHALLIKDVPATREVLGSLPNVFSALCLNARGLQSFVQCQPFERLFKVLLSPDYLPAMRRRRSSDPLGDTASNLGSAVDELMRHQPTLKTDATTAIIKLLEEICNLGRDPKYICQKPSIQKADGTTSAPPPRSNHAAEEASSEDEEEEEVQAMQSFNSAQQNETEPNQQVVGTEERIPIPLMDYILNVMKFVESILSNNTTDDHCQEFVNQKGLLPLVTILGLPNLPIDFPTSAACQAVAGVCKSILTLSHEPKVLQEGLLQLDLILSSLEPLHRPIESPGGSVLLRELACAGNVADATLSAQATPLLHALTAAHAYIMMFVHTCRVGQSEIRSISVNQWGSQLGLSVLSKLSQLYCSLVWESTVLLSLCTPNSLPSGCEFGQADMQKLVPKDEKAGTTQGGKRSDGEQDGTAGSMDASAQGLLEGIELDGDTLAPMETDEPSSSDSKGKSKITPAMAARIKQIKPLLSASSRLGRALAELFGLLVKLCVGSPVRQRRSHHAASTTTAPTPAARSTASALTKLLTKGLSWQPPPYTPTPRFRLTFFICSVGFTSPMLFDERKYPYHLMLQKFLCSGGHNALFETFNWALSMGGKVPVSEGLEHSDLPDGTGEFLDAWLMLVEKMVNPTTVLESPHSLPAKLPGGVQSFPQFSALRFLVVTQKAAFTCIKNLWNRKPLKVYGGRMAESMLAILCHILRGEPVIRERLSKEKEGSRGEEEAGQEEGGSRREPQVNQQQLQQLMDMGFTREHAMEALLNTSTMEQATEYLLTHPPPIIGGVVRDLSMSEEDQMMRAIAMSLGQDIPMDQRAESPEEVACRKEEEERKAREKQEEEEAKCLEKFQDADPLEQDELHTFTDTMLPGCFHLLDELPDTVYRVCDLIMTAIKRNGADYRDMILKQVVNQVWEAADVLIKAALPLTTSDTKTVSEWISQMATLPQASNLATRILLLTLLFEELKLPCAWVVESSGILNVLIKLLEVVQPCLQAAKEQKEVQTPKWITPVLLLIDFYEKTAISSKRRAQMTKYLQSNSNNWRWFDDRSGRWCSYSASNNSTIDSAWKSGETSVRFTAGRRRYTVQFTTMVQVNEETGNRRPVMLTLLRVPRLSKNSKSSNGQELEKTLEESKETDIKRKENKGNDIPLALESTNTEKDASLEETKIGEILIQGLTEDMVTVLIRACVSMLGVPVDPDTLHATLRLCLRLTRDHKYAMMFAELKSTRMILNLTQSSGFNGFTPLVTLLLRHIIEDPCTLRHTMEKVVRSAATSGAGSTTSGVVSGSLGSREINYILRVLGPAACRNPDIFTEVANCCIRIALPAPRGSGTASDDEFENLRIKGPNAVQLVKTTPLKPSSLPVIPDTIKEVIYDMLNALAAYHAPEEADKSDPKPGGMTQEVGQLLQDMGDDVYQQYRSLTRQSSDFDTQSGFSLNSQVFAADGAPAETSTTGTSQGEGASTPEETREGKKDKEGDRTSEEGKQKGKGSKPLMPTSTILRLLAELVRSYVGIATLIANYSYTVGQSELIKEDCSVLAFVLDHLLPHTQNAEDKDTPALARLFLASLAAAGSGTDAQVALVNEVKAALGRALAMAESTEKHARLQAVMCIISTIMESCPSTSSFYSSATAKTQHNGMNNIIRLFLKKGLVNDLARVPHSLDLSSPNMANTVNAALKPLETLSRIVNQPSSLFGSKSASSKSKSEQDAQGASQDSSSHQQDPGEPGEAEVQEEDHDVTQTEVADGDIMDGEAETDSVVIAGQPEVLSSQEMQVENELEDLIDELLERDGGSGNSTIIVSRSGEDESQEDVLMDEAPSNLSQASTLQANREDSMNILDPEDEEEHTQEEDSSGSNEDEDDSQDEEEEEEEDEEDDQEDDEGEEGDEDDDDDGSEMELDEDYPDMNASPLVRFERFDREDDLIIEFDNMFSSATDIPPSPGNIPTTHPLMVRHADHSSLTLGSGSSTTRLTQGIGRSQRTLRQLTANTGHTIHVHYPGNRQPNPPLILQRLLGPSAAADILQLSSSLPLQSRGRARLLVGNDDVHIIARSDDELLDDFFHDQSTATSQAGTLSSIPTALTRWTEECKVLDAESMHDCVSVVKVPIVNHLEFLRDEELEERREKRRKQLAEEETKIIDKGKEDKENRDQSAQCTVSKTNDSTEQNVSDGTPMPDSYPTTPSSTDAPTSESKETLGTLQPSQQQPTLPPPPSLGEISQELQSPAEEVGNSTQLLMPIELEELGPTRPSGEAETTQMELSPAPTITSLSPERAEDSDALTAVSSQLEGSPMDTSSLASCTLEEAVGDTPAAGSSEQPTAGSSTPGDAPSVGADVQGRPDVSRESTQPPEDSSPPASSESSSTRDSAVAISGADSRGILEEPLPSTSSEEEDPLAGISLPEGVDPSFLAALPDDIRREVLQNQLGIRPPTRTAPSTNSSTPAVVGNPGVTEVSPEFLAALPPAIQEEVLAQQRAEQQRRELAQNASSDTPMDPVTFIQTLPSDLRRSVLEDMEDSVLAVMPPDIAAEAQALRREQEARQRQLMHERLFGHSSTSALSAILRSPAFTSRLSGNRGVQYTRLAVQRGGTFQMGGSSSHNRPSGSNVDTLLRLRGRLLLDHEALSCLLVLLFVDEPKLNTSRLHRVLRNLCYHAQTRHWVIRSLLSILQRSSESELCIETPKLSTSEERGKKSSKSCASSSHENRPLDLLHKMESKSSNQLSWLSVSMDAALGCRTNIFQIQRSGGRKHTEKHASSGSTVHIHPQAAPVVCRHVLDTLIQLAKVFPSHFTQQRTKETNCESDRERGSKQACSPCSSQSSSSGICTDFWDLLVKLDNMNVSRKGKNSVKSVPVSAGGEGETSLHSLEASPLGQLMNMLSHPVIRRSSLLTEKLLRLLSLISIALPENKVSEVQTNSSNSGSSTAATSNTSTTTTTTTATAPTPTPPAATTPVTSAPALVAATAISTITVAASTTVTTPTTATTTVSTSTTKGNKSPAKVGEGGSSSVDFKMVSSGLTENQLQLSVEVLTSHSCSEEGLEDAANVLLQLSRGDSGTRDTVLKLLLNGARHLGYTLCKQIGTLLAELREYNLEQQRRAQCETLSPDGLPEEQPQTTKLKGKMQSRFDMAENVVIVASQKRPLGGRELQLPSMSMLTSKTSTQKFFLRVLQVIIQLRDDTRRANKKAKQTGRLGSSGLGSASSIQAAVRQLEAEADAIIQMVREGQRARRQQQAATSESSNQSETSVRREESPMDVDQPSPSAQDTQSIVVSDGTPQGEKEKEERPPELPLLSEQLSLDELWDMLGECLKELEESHDQHAVLVLQPAVEAFFLVHATERESKPPVRDTRESQLAHIKDEPPPLSPAPLTPATPSSLDPFFSREPSSMHISSSLPPDTQKFLRFAETHRTVLNQILRQSTTHLADGPFAVLVDYIRVLDFDVKRKYFRQELERLDEGLRKEDMAVHVRRDHVFEDSYRELHRKSPEEMKNRLYIVFEGEEGQDAGGLLREWYMIISREMFNPMYALFRTSPGDRVTYTINPSSHCNPNHLSYFKFVGRIVAKAVYDNRLLECYFTRSFYKHILGKSVRYTDMESEDYHFYQGLVYLLENDVSTLGYDLTFSTEVQEFGVCEVRDLKPNGANILVTEENKKEYVHLVCQMRMTGAIRKQLAAFLEGFYEIIPKRLISIFTEQELELLISGLPTIDIDDLKSNTEYHKYQSNSIQIQWFWRALRSFDQADRAKFLQFVTGTSKVPLQGFAALEGMNGIQKFQIHRDDRSTDRLPSAHTCFNQLDLPAYESFEKLRHMLLLAIQECSEGFGLA.

A disordered region spans residues 521–575; it reads RASSSNSSTSISGPGPGPGPGPGPGPGPGPGPGPGPGLGPSLGPGPGPGPRPGVQ. The span at 523–533 shows a compositional bias: low complexity; sequence SSSNSSTSISG. A compositionally biased stretch (pro residues) spans 535 to 571; that stretch reads GPGPGPGPGPGPGPGPGPGPGPGLGPSLGPGPGPGPR. Phosphoserine is present on residues S724 and S725. 3 disordered regions span residues 781–834, 1054–1077, and 1094–1114; these read QKAD…VVGT, DEKA…AGSM, and TLAP…KSKI. Residues 801-811 show a composition bias toward acidic residues; it reads ASSEDEEEEEV. Polar residues predominate over residues 813-832; that stretch reads AMQSFNSAQQNETEPNQQVV. S816 carries the post-translational modification Phosphoserine. Position 1160 is a phosphoserine (S1160). Residues 1367-1378 show a composition bias toward basic and acidic residues; that stretch reads LSKEKEGSRGEE. Positions 1367–1396 are disordered; the sequence is LSKEKEGSRGEEEAGQEEGGSRREPQVNQQ. In terms of domain architecture, UBA spans 1392–1431; sequence QVNQQQLQQLMDMGFTREHAMEALLNTSTMEQATEYLLTH. A phosphoserine mark is found at S1444, S1446, S1458, and S1471. A UIM domain is found at 1446 to 1465; sequence SEEDQMMRAIAMSLGQDIPM. The disordered stretch occupies residues 1472–1491; it reads PEEVACRKEEEERKAREKQE. The WWE domain maps to 1679–1756; sequence RAQMTKYLQS…ETGNRRPVML (78 aa). Residues 1766–1802 are disordered; that stretch reads KNSKSSNGQELEKTLEESKETDIKRKENKGNDIPLAL. Basic and acidic residues predominate over residues 1775–1795; sequence ELEKTLEESKETDIKRKENKG. S1983 bears the Phosphoserine mark. Disordered regions lie at residues 2095–2142, 2339–2420, and 2433–2556; these read APAE…SKPL, SLFG…QEMQ, and LERD…ASPL. The span at 2097–2112 shows a compositional bias: low complexity; the sequence is AETSTTGTSQGEGAST. Position 2112 is a phosphothreonine (T2112). The segment covering 2114–2134 has biased composition (basic and acidic residues); that stretch reads EETREGKKDKEGDRTSEEGKQ. Over residues 2339–2368 the composition is skewed to low complexity; that stretch reads SLFGSKSASSKSKSEQDAQGASQDSSSHQQ. Residue S2343 is modified to Phosphoserine. K2344 is subject to N6-acetyllysine. Composition is skewed to acidic residues over residues 2372-2383 and 2391-2402; these read EPGEAEVQEEDH and ADGDIMDGEAET. Residues S2439, S2442, and S2468 each carry the phosphoserine modification. Residues 2465–2475 are compositionally biased toward polar residues; it reads SNLSQASTLQA. Over residues 2485-2549 the composition is skewed to acidic residues; it reads DPEDEEEHTQ…SEMELDEDYP (65 aa). Residues S2604, S2609, and S2612 each carry the phosphoserine modification. Residue T2631 is modified to Phosphothreonine. S2661, S2672, and S2696 each carry phosphoserine. Basic and acidic residues predominate over residues 2781–2793; the sequence is IIDKGKEDKENRD. 2 disordered regions span residues 2781–3047 and 3113–3136; these read IIDK…GVDP and QQRA…MDPV. Polar residues predominate over residues 2794 to 2813; that stretch reads QSAQCTVSKTNDSTEQNVSD. Positions 2815 to 2849 are enriched in low complexity; sequence TPMPDSYPTTPSSTDAPTSESKETLGTLQPSQQQP. T2828 bears the Phosphothreonine mark. Polar residues-rich tracts occupy residues 2895-2912, 2924-2941, and 2954-2967; these read AETT…TSLS, AVSS…SLAS, and AGSS…SSTP. 6 positions are modified to phosphoserine: S2903, S2910, S2912, S2938, S2964, and S2965. Residue T2966 is modified to Phosphothreonine. A compositionally biased stretch (low complexity) spans 2990-3009; it reads PPEDSSPPASSESSSTRDSA. S2995 is modified (phosphoserine). 5 positions are modified to phosphoserine: S3193, S3194, S3199, S3204, and S3212. Position 3226 is an omega-N-methylarginine (R3226). Disordered stretches follow at residues 3320–3343, 3431–3458, 3482–3501, 3548–3590, and 3615–3642; these read PKLS…SHEN, QRTK…SQSS, GKNS…ETSL, SEVQ…TTPV, and TPTT…EGGS. Positions 3432-3446 are enriched in basic and acidic residues; that stretch reads RTKETNCESDRERGS. Low complexity predominate over residues 3447-3458; it reads KQACSPCSSQSS. Low complexity-rich tracts occupy residues 3552 to 3579 and 3615 to 3628; these read TNSS…ATAP and TPTT…TSTT. S3633, S3740, S3830, S3835, S3837, and S3838 each carry phosphoserine. The segment at 3815 to 3836 is disordered; it reads TRRANKKAKQTGRLGSSGLGSA. Residues 3826 to 3836 show a composition bias toward low complexity; sequence GRLGSSGLGSA. Disordered regions lie at residues 3859–3927 and 3974–4028; these read EGQR…LPLL and RESK…SSSL. Over residues 3871-3880 the composition is skewed to polar residues; sequence TSESSNQSET. S3887, S3895, and S3907 each carry phosphoserine. The span at 3894-3905 shows a compositional bias: polar residues; it reads PSPSAQDTQSIV. The residue at position 3910 (T3910) is a Phosphothreonine. 2 stretches are compositionally biased toward basic and acidic residues: residues 3913 to 3922 and 3974 to 3995; these read GEKEKEERPP and RESK…KDEP. Phosphoserine occurs at positions 3986 and 3999. Residues 3996 to 4005 are compositionally biased toward pro residues; sequence PPLSPAPLTP. A phosphothreonine mark is found at T4004 and T4007. The segment covering 4018–4028 has biased composition (polar residues); that stretch reads EPSSMHISSSL. One can recognise an HECT domain in the interval 4118–4454; it reads SPEEMKNRLY…QECSEGFGLA (337 aa). Position 4351 is a phosphotyrosine (Y4351). C4421 serves as the catalytic Glycyl thioester intermediate.

The protein belongs to the UPL family. TOM1/PTR1 subfamily. As to quaternary structure, interacts with isoform p14ARF of CDKN2A which strongly inhibits HUWE1 ubiquitin ligase activity. Interacts with MYCN, POLB and CDC6. Interacts with isoform 2 of PA2G4. Interacts with NR1D1. Interacts with AMBRA1. Interacts with HAPSTR1. Interacts with HAPSTR2. In hepatocytes, interacts with PAQR3; the interaction promotes PPARA poylubiquitination and STUB1-mediated degradation. Post-translationally, phosphorylated on tyrosine, phosphorylation is probably required for its ability to inhibit TP53 transactivation. In terms of tissue distribution, widely expressed.

Its subcellular location is the cytoplasm. The protein resides in the nucleus. It localises to the mitochondrion. It carries out the reaction S-ubiquitinyl-[E2 ubiquitin-conjugating enzyme]-L-cysteine + [acceptor protein]-L-lysine = [E2 ubiquitin-conjugating enzyme]-L-cysteine + N(6)-ubiquitinyl-[acceptor protein]-L-lysine.. Its pathway is protein modification; protein ubiquitination. E3 ubiquitin-protein ligase which mediates ubiquitination and subsequent proteasomal degradation of target proteins. Regulates apoptosis by catalyzing the polyubiquitination and degradation of MCL1. Mediates monoubiquitination of DNA polymerase beta (POLB) at 'Lys-41', 'Lys-61' and 'Lys-81', thereby playing a role in base-excision repair. Also ubiquitinates the p53/TP53 tumor suppressor and core histones including H1, H2A, H2B, H3 and H4. Ubiquitinates MFN2 to negatively regulate mitochondrial fusion in response to decreased stearoylation of TFRC. Ubiquitination of MFN2 also takes place following induction of mitophagy; AMBRA1 acts as a cofactor for HUWE1-mediated ubiquitination. Regulates neural differentiation and proliferation by catalyzing the polyubiquitination and degradation of MYCN. May regulate abundance of CDC6 after DNA damage by polyubiquitinating and targeting CDC6 to degradation. Mediates polyubiquitination of PA2G4. Acts in concert with MYCBP2 to regulate the circadian clock gene expression by promoting the lithium-induced ubiquination and degradation of NR1D1. Binds to an upstream initiator-like sequence in the preprodynorphin gene. Mediates HAPSTR1 degradation, but is also a required cofactor in the pathway by which HAPSTR1 governs stress signaling. Acts as a regulator of the JNK and NF-kappa-B signaling pathways by mediating assembly of heterotypic 'Lys-63'-/'Lys-48'-linked branched ubiquitin chains that are then recognized by TAB2: HUWE1 mediates branching of 'Lys-48'-linked chains of substrates initially modified with 'Lys-63'-linked conjugates by TRAF6. 'Lys-63'-/'Lys-48'-linked branched ubiquitin chains protect 'Lys-63'-linkages from CYLD deubiquitination. Ubiquitinates PPARA in hepatocytes. The polypeptide is E3 ubiquitin-protein ligase HUWE1 (Huwe1) (Rattus norvegicus (Rat)).